A 352-amino-acid chain; its full sequence is tRNA pseudouridine synthase D (352 aa).

Residue Asp-81 is the Nucleophile of the active site. Positions 157–303 (GIPNYFGAQR…MSHERRILRL (147 aa)) constitute a TRUD domain.

Belongs to the pseudouridine synthase TruD family.

It carries out the reaction uridine(13) in tRNA = pseudouridine(13) in tRNA. Its function is as follows. Responsible for synthesis of pseudouridine from uracil-13 in transfer RNAs. The chain is tRNA pseudouridine synthase D from Pseudomonas fluorescens (strain Pf0-1).